A 191-amino-acid chain; its full sequence is Flavin prenyltransferase UbiX (191 aa).

Residues 13 to 15 (GAS), Thr-39, 90 to 93 (TMKT), and Arg-125 each bind FMN. Dimethylallyl phosphate is bound by residues Tyr-155 and Lys-171.

It belongs to the UbiX/PAD1 family.

The catalysed reaction is dimethylallyl phosphate + FMNH2 = prenylated FMNH2 + phosphate. Its function is as follows. Flavin prenyltransferase that catalyzes the synthesis of the prenylated FMN cofactor (prenyl-FMN) for 4-hydroxy-3-polyprenylbenzoic acid decarboxylase UbiD. The prenyltransferase is metal-independent and links a dimethylallyl moiety from dimethylallyl monophosphate (DMAP) to the flavin N5 and C6 atoms of FMN. The chain is Flavin prenyltransferase UbiX from Methanothermobacter thermautotrophicus (strain ATCC 29096 / DSM 1053 / JCM 10044 / NBRC 100330 / Delta H) (Methanobacterium thermoautotrophicum).